The sequence spans 63 residues: Protein sigN172 (63 aa).

In Dictyostelium discoideum (Social amoeba), this protein is Protein sigN172.